Consider the following 239-residue polypeptide: MLNIKTKKKNKKRIYVFNKNPEFKFKHLVFQKNKFILKIINEIDKIDLMRSEIFNSTLPIDPQTGNILVRFRKLNRNRLLAIKAIIQAMLYHFNIKTKKVTASVEQLADECGLSTVSKSGNKSITRASRLISQFMEPMGFIKCKKIKTTNNKFSKEIILTPLFFMILVKNSSLSEGDTHLKQEFKILKNKNVHINSSETFAKQEILKKIINKYSLNKLKKLGPKKIKEKINTEYKNIKK.

The protein belongs to the IncFII RepA family.

Functionally, this protein is essential for plasmid replication; it is involved in copy control functions. The sequence is that of Probable replication-associated protein repA2 (repA2) from Buchnera aphidicola subsp. Baizongia pistaciae (strain Bp).